The sequence spans 442 residues: tRNA-2-methylthio-N(6)-dimethylallyladenosine synthase (442 aa).

In terms of domain architecture, MTTase N-terminal spans 3 to 120 (KKLYIETHGC…LPEMIDAARV (118 aa)). [4Fe-4S] cluster contacts are provided by cysteine 12, cysteine 49, cysteine 83, cysteine 157, cysteine 161, and cysteine 164. The 233-residue stretch at 143-375 (RVDGPSAYVS…QHRLNQQGFE (233 aa)) folds into the Radical SAM core domain. One can recognise a TRAM domain in the interval 378–442 (RQMVGSIQRI…PHSLRGSLLQ (65 aa)).

Belongs to the methylthiotransferase family. MiaB subfamily. Monomer. Requires [4Fe-4S] cluster as cofactor.

The protein localises to the cytoplasm. It catalyses the reaction N(6)-dimethylallyladenosine(37) in tRNA + (sulfur carrier)-SH + AH2 + 2 S-adenosyl-L-methionine = 2-methylsulfanyl-N(6)-dimethylallyladenosine(37) in tRNA + (sulfur carrier)-H + 5'-deoxyadenosine + L-methionine + A + S-adenosyl-L-homocysteine + 2 H(+). Functionally, catalyzes the methylthiolation of N6-(dimethylallyl)adenosine (i(6)A), leading to the formation of 2-methylthio-N6-(dimethylallyl)adenosine (ms(2)i(6)A) at position 37 in tRNAs that read codons beginning with uridine. This is tRNA-2-methylthio-N(6)-dimethylallyladenosine synthase from Pseudomonas syringae pv. syringae (strain B728a).